Reading from the N-terminus, the 239-residue chain is UDP-2,3-diacylglucosamine hydrolase (239 aa).

Mn(2+)-binding residues include aspartate 8, histidine 10, aspartate 41, asparagine 78, and histidine 113. 78–79 (NR) lines the substrate pocket. 5 residues coordinate substrate: aspartate 121, serine 159, asparagine 163, lysine 166, and histidine 194. Mn(2+) is bound by residues histidine 194 and histidine 196.

The protein belongs to the LpxH family. The cofactor is Mn(2+).

The protein resides in the cell inner membrane. It carries out the reaction UDP-2-N,3-O-bis[(3R)-3-hydroxytetradecanoyl]-alpha-D-glucosamine + H2O = 2-N,3-O-bis[(3R)-3-hydroxytetradecanoyl]-alpha-D-glucosaminyl 1-phosphate + UMP + 2 H(+). Its pathway is glycolipid biosynthesis; lipid IV(A) biosynthesis; lipid IV(A) from (3R)-3-hydroxytetradecanoyl-[acyl-carrier-protein] and UDP-N-acetyl-alpha-D-glucosamine: step 4/6. Hydrolyzes the pyrophosphate bond of UDP-2,3-diacylglucosamine to yield 2,3-diacylglucosamine 1-phosphate (lipid X) and UMP by catalyzing the attack of water at the alpha-P atom. Involved in the biosynthesis of lipid A, a phosphorylated glycolipid that anchors the lipopolysaccharide to the outer membrane of the cell. The chain is UDP-2,3-diacylglucosamine hydrolase from Shewanella sp. (strain MR-7).